Consider the following 380-residue polypeptide: Negative elongation factor E (380 aa).

Positions 7–36 form a coiled coil; sequence GLSEEEEALQKKFNKLKKKKKALLALKKQS. A compositionally biased stretch (low complexity) spans 30–43; that stretch reads LALKKQSSSSTTSQ. The disordered stretch occupies residues 30–67; sequence LALKKQSSSSTTSQGGVKRSLSEQPVMDTATATEQAKQ. S51 is modified (phosphoserine). K78 participates in a covalent cross-link: Glycyl lysine isopeptide (Lys-Gly) (interchain with G-Cter in SUMO1); alternate. K78 is covalently cross-linked (Glycyl lysine isopeptide (Lys-Gly) (interchain with G-Cter in SUMO2); alternate). Residues 79 to 258 are disordered; sequence AETKNSGFKR…SDSFPERRAP (180 aa). K82 is covalently cross-linked (Glycyl lysine isopeptide (Lys-Gly) (interchain with G-Cter in SUMO2)). Basic and acidic residues predominate over residues 90 to 101; the sequence is RTLEGKLKDPEK. Phosphoserine is present on residues S113 and S115. E122 carries the post-translational modification PolyADP-ribosyl glutamic acid. A phosphoserine mark is found at S131 and S139. PolyADP-ribosyl glutamic acid is present on E151. S165 is modified (phosphoserine). E172 carries the polyADP-ribosyl glutamic acid modification. S179 carries the post-translational modification Phosphoserine. 3 positions are modified to phosphoserine; by CDK9: S181, S185, and S187. 4 tandem repeats follow at residues 184–185, 186–187, 188–189, and 190–191. The interval 184 to 243 is 30 X 2 AA approximate tandem repeats of R-[DSNE]; that stretch reads RSRSRDRSHERNRDRDRDRERDRDRDRDRDRERDRDRDRDRDRDRERDRDRERDRDRDRE. The segment covering 186 to 256 has biased composition (basic and acidic residues); it reads RSRDRSHERN…RRSDSFPERR (71 aa). Position 191 is a phosphoserine; by CDK9 (S191). The stretch at 192–193 is one 5; approximate repeat; it reads HE. A run of 25 repeats spans residues 194-195, 196-197, 198-199, 200-201, 202-203, 204-205, 206-207, 208-209, 210-211, 212-213, 214-215, 216-217, 218-219, 220-221, 222-223, 224-225, 226-227, 228-229, 230-231, 232-233, 234-235, 236-237, 238-239, 240-241, and 242-243. 2 positions are modified to phosphoserine: S249 and S251. The region spanning 262–332 is the RRM domain; the sequence is NTLYVYGEDM…VQLKVNIARK (71 aa). 2 positions are modified to phosphothreonine: T272 and T274. S281 and S353 each carry phosphoserine. The residue at position 374 (E374) is a PolyADP-ribosyl glutamic acid.

Belongs to the RRM NELF-E family. In terms of assembly, the NELF complex is composed of NELFA, NELFB, NELFCD (isoform NELF-C or isoform NELF-D) and NELFE. Interacts with NELFB. (Microbial infection) Binds to the HIV-1 TAR RNA which is located in the long terminal repeat (LTR) of HIV-1. Phosphorylated by the P-TEFb complex at sites next to its RNA recognition motif, promoting its release from chromatin. Post-translationally, sumoylated. In terms of processing, poly-ADP-ribosylated by PARP1, thereby preventing RNA-binding and relieving transcription pausing. Widely expressed. Expressed in heart, brain, lung, placenta, liver, skeletal muscle, kidney and pancreas.

It is found in the nucleus. Its subcellular location is the chromosome. Its function is as follows. Essential component of the NELF complex, a complex that negatively regulates the elongation of transcription by RNA polymerase II. The NELF complex, which acts via an association with the DSIF complex and causes transcriptional pausing, is counteracted by the P-TEFb kinase complex. Provides the strongest RNA binding activity of the NELF complex and may initially recruit the NELF complex to RNA. In terms of biological role, (Microbial infection) The NELF complex is involved in HIV-1 latency possibly involving recruitment of PCF11 to paused RNA polymerase II. This Homo sapiens (Human) protein is Negative elongation factor E (NELFE).